The primary structure comprises 369 residues: Biglycan (369 aa).

An N-terminal signal peptide occupies residues Met1–Ala16. A propeptide spanning residues Leu17–Asn37 is cleaved from the precursor. O-linked (Xyl...) (glycosaminoglycan) serine glycans are attached at residues Ser42 and Ser48. 2 disulfide bridges follow: Cys64–Cys70 and Cys68–Cys77. LRR repeat units lie at residues Lys83–Ile103, Ser104–Ile127, Ser128–Leu151, Val152–Ile172, Arg173–Leu196, Glu197–Leu221, Thr222–Ile242, Gln243–Ile266, Arg267–Leu290, Ser291–Ile313, Thr314–Val343, and Pro344–Lys369. O-linked (Xyl...) (glycosaminoglycan) serine glycans are attached at residues Ser181 and Ser199. 2 N-linked (GlcNAc...) asparagine glycosylation sites follow: Asn271 and Asn312. Cys322 and Cys355 are joined by a disulfide.

Belongs to the small leucine-rich proteoglycan (SLRP) family. SLRP class I subfamily. Homodimer. Forms a ternary complex with MFAP2 and ELN. In terms of processing, the two attached glycosaminoglycan chains can be either chondroitin sulfate or dermatan sulfate. Found in several connective tissues, especially in articular cartilages.

The protein localises to the secreted. It is found in the extracellular space. It localises to the extracellular matrix. In terms of biological role, may be involved in collagen fiber assembly. The chain is Biglycan (BGN) from Bos taurus (Bovine).